The chain runs to 522 residues: Target of rapamycin complex 2 subunit MAPKAP1 (522 aa).

The residue at position 2 (Ala-2) is an N-acetylalanine. Residues 2-184 are interaction with MAP3K2; sequence AFLDNPTIIL…KKIDVYLPLH (183 aa). Residues 2–267 are interaction with NBN; the sequence is AFLDNPTIIL…GFSTLALVEK (266 aa). Position 86 is a phosphothreonine (Thr-86). 4 positions are modified to phosphoserine: Ser-128, Ser-186, Ser-315, and Ser-356. In terms of domain architecture, CRIM spans 139–267; sequence QSILSVRLEQ…GFSTLALVEK (129 aa). Positions 279–353 are SIN1-type RBD; it reads LFVRINAAHG…QSAWEFCLVR (75 aa). Residues 382–487 form the SIN1-type PH domain; it reads HYKSFKVSMI…IVLKVNYILE (106 aa). Arg-393 is an a 1,2-diacyl-sn-glycero-3-phospho-(1D-myo-inositol-3,4,5-trisphosphate) binding site. Phosphothreonine is present on Thr-398. Residues Lys-428 and Lys-464 each coordinate a 1,2-diacyl-sn-glycero-3-phospho-(1D-myo-inositol-3,4,5-trisphosphate). The interval 468–522 is interaction with ATF2; it reads FESDAATVNEIVLKVNYILESRASTARADYFAQKQRKLNRRTSFSFQKEKKSGQQ. At Ser-510 the chain carries Phosphoserine.

It belongs to the SIN1 family. Component of the mechanistic target of rapamycin complex 2 (mTORC2), consisting in two heterotretramers composed of MTOR, MLST8, RICTOR and MAPKAP1/SIN1. The mTORC2 core complex associates with PRR5/PROTOR1 and/or PRR5L/PROTOR2. Contrary to mTORC1, mTORC2 does not bind to and is not sensitive to FKBP12-rapamycin. Interacts with MAP3K2. Interacts with ATF2. Interacts with MAPK8. Interacts with GTP-bound HRAS and KRAS; inhibiting their activity. Interacts with IFNAR2. As to quaternary structure, interacts with CCDC28B. In terms of assembly, interacts with NBN. In terms of processing, phosphorylation at Ser-128 by PKC promotes relocalization to the perinuclear region, where the mTORC2 complex specifically mediates phosphorylation of SGK1. Phosphorylated at Thr-86 by AKT1 or RPS6KB1 in the presence of growth factors; the effect of this phosphorylation is however unclear. According to two studies, phosphorylation at Thr-86 by AKT1 is part of a positive feedback loop that increases mTORC2 activation. According to another study, phosphorylation at Thr-86 and Thr-398 by RPS6KB1 promotes dissociation from the mTORC2 complex, leading to inhibit mTORC2 signaling. As to expression, ubiquitously expressed, with highest levels in heart and skeletal muscle.

The protein localises to the cell membrane. It localises to the endoplasmic reticulum membrane. Its subcellular location is the early endosome membrane. The protein resides in the late endosome membrane. It is found in the lysosome membrane. The protein localises to the golgi apparatus membrane. It localises to the mitochondrion outer membrane. Its subcellular location is the cytoplasm. The protein resides in the perinuclear region. It is found in the nucleus. The protein localises to the cytosol. Its activity is regulated as follows. Phosphatidylinositol 3,4,5-trisphosphate (PI(3,4,5)P3) promotes MTOR activation by relieving MAPKAP1/SIN1-mediated inhibition of MTOR that takes place in absence of PI(3,4,5)P3. Its function is as follows. Component of the mechanistic target of rapamycin complex 2 (mTORC2), which transduces signals from growth factors to pathways involved in proliferation, cytoskeletal organization, lipogenesis and anabolic output. In response to growth factors, mTORC2 phosphorylates and activates AGC protein kinase family members, including AKT (AKT1, AKT2 and AKT3), PKC (PRKCA, PRKCB and PRKCE) and SGK1. In contrast to mTORC1, mTORC2 is nutrient-insensitive. Within the mTORC2 complex, MAPKAP1/SIN1 acts as a substrate adapter which recognizes and binds AGC protein kinase family members for phosphorylation by MTOR. mTORC2 plays a critical role in AKT1 activation by mediating phosphorylation of different sites depending on the context, such as 'Thr-450', 'Ser-473', 'Ser-477' or 'Thr-479', facilitating the phosphorylation of the activation loop of AKT1 on 'Thr-308' by PDPK1/PDK1 which is a prerequisite for full activation. mTORC2 catalyzes the phosphorylation of SGK1 at 'Ser-422' and of PRKCA on 'Ser-657'. The mTORC2 complex also phosphorylates various proteins involved in insulin signaling, such as FBXW8 and IGF2BP1. mTORC2 acts upstream of Rho GTPases to regulate the actin cytoskeleton, probably by activating one or more Rho-type guanine nucleotide exchange factors. mTORC2 promotes the serum-induced formation of stress-fibers or F-actin. MAPKAP1 inhibits MAP3K2 by preventing its dimerization and autophosphorylation. Inhibits HRAS and KRAS independently of mTORC2 complex. Enhances osmotic stress-induced phosphorylation of ATF2 and ATF2-mediated transcription. Involved in ciliogenesis, regulates cilia length through its interaction with CCDC28B independently of mTORC2 complex. In terms of biological role, in contrast to isoform 1, isoform 2 and isoform 6, isoform 4 is not a component of the a mTORC2 complex. The sequence is that of Target of rapamycin complex 2 subunit MAPKAP1 from Homo sapiens (Human).